Consider the following 139-residue polypeptide: Large ribosomal subunit protein mL42 (139 aa).

The transit peptide at 1-32 (MAVAAVKWVMSKRTILKHLFPVQNGALYCVCH) directs the protein to the mitochondrion.

Belongs to the mitochondrion-specific ribosomal protein mL42 family. Component of the mitochondrial ribosome large subunit (39S) which comprises a 16S rRNA and about 50 distinct proteins. Component of the mitochondrial ribosome small subunit (28S) which comprises a 12S rRNA and about 30 distinct proteins.

The protein localises to the mitochondrion. This chain is Large ribosomal subunit protein mL42 (MRPL42), found in Pongo abelii (Sumatran orangutan).